A 156-amino-acid polypeptide reads, in one-letter code: Holliday junction resolvase (156 aa).

It belongs to the RuvC family. Poxviruses-type subfamily. Mg(2+) is required as a cofactor.

Nuclease that specifically cleaves and resolves four-way DNA Holliday junctions into linear duplex products. This is Holliday junction resolvase from Vertebrata (FPV).